We begin with the raw amino-acid sequence, 185 residues long: Peptidyl-tRNA hydrolase (185 aa).

Residue Y14 coordinates tRNA. Catalysis depends on H19, which acts as the Proton acceptor. 3 residues coordinate tRNA: F64, N66, and N112.

This sequence belongs to the PTH family. As to quaternary structure, monomer.

Its subcellular location is the cytoplasm. It catalyses the reaction an N-acyl-L-alpha-aminoacyl-tRNA + H2O = an N-acyl-L-amino acid + a tRNA + H(+). Hydrolyzes ribosome-free peptidyl-tRNAs (with 1 or more amino acids incorporated), which drop off the ribosome during protein synthesis, or as a result of ribosome stalling. In terms of biological role, catalyzes the release of premature peptidyl moieties from peptidyl-tRNA molecules trapped in stalled 50S ribosomal subunits, and thus maintains levels of free tRNAs and 50S ribosomes. The polypeptide is Peptidyl-tRNA hydrolase (Lacticaseibacillus paracasei (strain ATCC 334 / BCRC 17002 / CCUG 31169 / CIP 107868 / KCTC 3260 / NRRL B-441) (Lactobacillus paracasei)).